A 255-amino-acid chain; its full sequence is Ribosome maturation factor RimP (255 aa).

Residues 177–255 (LRRGSAPPQD…ARLKNRDTLH (79 aa)) are disordered. A compositionally biased stretch (acidic residues) spans 186 to 202 (DGEDVDEEAGEAPEDEV). Basic and acidic residues predominate over residues 216 to 230 (PKMDKKSDKKSDKPV).

It belongs to the RimP family.

It localises to the cytoplasm. Its function is as follows. Required for maturation of 30S ribosomal subunits. The protein is Ribosome maturation factor RimP of Methylorubrum populi (strain ATCC BAA-705 / NCIMB 13946 / BJ001) (Methylobacterium populi).